The sequence spans 118 residues: Ribonuclease P protein component (118 aa).

Belongs to the RnpA family. In terms of assembly, consists of a catalytic RNA component (M1 or rnpB) and a protein subunit.

The enzyme catalyses Endonucleolytic cleavage of RNA, removing 5'-extranucleotides from tRNA precursor.. Its function is as follows. RNaseP catalyzes the removal of the 5'-leader sequence from pre-tRNA to produce the mature 5'-terminus. It can also cleave other RNA substrates such as 4.5S RNA. The protein component plays an auxiliary but essential role in vivo by binding to the 5'-leader sequence and broadening the substrate specificity of the ribozyme. The sequence is that of Ribonuclease P protein component from Desulfatibacillum aliphaticivorans.